Here is a 382-residue protein sequence, read N- to C-terminus: 8-amino-7-oxononanoate synthase (382 aa).

Arg-26 lines the substrate pocket. 104 to 105 lines the pyridoxal 5'-phosphate pocket; it reads GY. His-129 provides a ligand contact to substrate. Pyridoxal 5'-phosphate contacts are provided by residues Ser-175, 200 to 203, and 232 to 235; these read DEAH and TLSK. Lys-235 is modified (N6-(pyridoxal phosphate)lysine). Thr-345 provides a ligand contact to substrate.

Belongs to the class-II pyridoxal-phosphate-dependent aminotransferase family. BioF subfamily. Homodimer. The cofactor is pyridoxal 5'-phosphate.

The enzyme catalyses 6-carboxyhexanoyl-[ACP] + L-alanine + H(+) = (8S)-8-amino-7-oxononanoate + holo-[ACP] + CO2. It participates in cofactor biosynthesis; biotin biosynthesis. Functionally, catalyzes the decarboxylative condensation of pimeloyl-[acyl-carrier protein] and L-alanine to produce 8-amino-7-oxononanoate (AON), [acyl-carrier protein], and carbon dioxide. This Mycolicibacterium smegmatis (strain ATCC 700084 / mc(2)155) (Mycobacterium smegmatis) protein is 8-amino-7-oxononanoate synthase (bioF).